A 122-amino-acid polypeptide reads, in one-letter code: MKKERRQKSFHRGVRAEKWAAWWLRFKWFHIAEIRFKTKCGEIDLIARRGNLVLIVEVKARSTLAEAMAAVSRMNERRIEAAADIWLARQKDRALLDVRFDLIAILPWRLPQHIPAFFTSDK.

This sequence belongs to the UPF0102 family.

This Bartonella quintana (strain Toulouse) (Rochalimaea quintana) protein is UPF0102 protein BQ09720.